The sequence spans 232 residues: Ubiquinone biosynthesis O-methyltransferase (232 aa).

S-adenosyl-L-methionine contacts are provided by R36, G55, D76, and L120.

The protein belongs to the methyltransferase superfamily. UbiG/COQ3 family.

The enzyme catalyses a 3-demethylubiquinol + S-adenosyl-L-methionine = a ubiquinol + S-adenosyl-L-homocysteine + H(+). It catalyses the reaction a 3-(all-trans-polyprenyl)benzene-1,2-diol + S-adenosyl-L-methionine = a 2-methoxy-6-(all-trans-polyprenyl)phenol + S-adenosyl-L-homocysteine + H(+). Its pathway is cofactor biosynthesis; ubiquinone biosynthesis. Its function is as follows. O-methyltransferase that catalyzes the 2 O-methylation steps in the ubiquinone biosynthetic pathway. In Pseudomonas aeruginosa (strain ATCC 15692 / DSM 22644 / CIP 104116 / JCM 14847 / LMG 12228 / 1C / PRS 101 / PAO1), this protein is Ubiquinone biosynthesis O-methyltransferase.